We begin with the raw amino-acid sequence, 951 residues long: Protein translocase subunit SecA (951 aa).

ATP-binding positions include glutamine 90, 108-112 (GEGKT), and aspartate 509.

This sequence belongs to the SecA family. Monomer and homodimer. Part of the essential Sec protein translocation apparatus which comprises SecA, SecYEG and auxiliary proteins SecDF. Other proteins may also be involved.

The protein localises to the cell inner membrane. It is found in the cellular thylakoid membrane. It localises to the cytoplasm. The enzyme catalyses ATP + H2O + cellular proteinSide 1 = ADP + phosphate + cellular proteinSide 2.. Part of the Sec protein translocase complex. Interacts with the SecYEG preprotein conducting channel. Has a central role in coupling the hydrolysis of ATP to the transfer of proteins into and across the cell membrane, serving as an ATP-driven molecular motor driving the stepwise translocation of polypeptide chains across the membrane. Functionally, probably participates in protein translocation into and across both the cytoplasmic and thylakoid membranes in cyanobacterial cells. The sequence is that of Protein translocase subunit SecA from Prochlorococcus marinus (strain MIT 9303).